The chain runs to 307 residues: MTWKTQLPPVRGKLLVDEALAPFTWFRVGGPADVVFLPADEQDLADFLKALDPAVPVLAIGVGSNLLVRDGGVEGVVIRLGKGFNTVEALGDNRIKAGSAVPDAILARKAAEAGIAGLEFYAGIPGTVGGATIMNAGCYGSETANILISARVMDRRGQVRELTAAELHFTYRHSALQDAGLIVLDAVFEGLADDPAAIKARMAEITSRRETTQPIREKTGGSTFKNPPGHSSWKLVDEAGWRGKRFSASGKEGGGAMFSPLHSNFLINTGEATAADLEGLGDTVRADVLAKTGVQLDWEIKRIGRPA.

The FAD-binding PCMH-type domain maps to 27–193; sequence RVGGPADVVF…LDAVFEGLAD (167 aa). The active site involves arginine 172. The active-site Proton donor is the serine 222. The active site involves glutamate 299.

This sequence belongs to the MurB family. Requires FAD as cofactor.

The protein resides in the cytoplasm. It carries out the reaction UDP-N-acetyl-alpha-D-muramate + NADP(+) = UDP-N-acetyl-3-O-(1-carboxyvinyl)-alpha-D-glucosamine + NADPH + H(+). It participates in cell wall biogenesis; peptidoglycan biosynthesis. Cell wall formation. The sequence is that of UDP-N-acetylenolpyruvoylglucosamine reductase from Caulobacter sp. (strain K31).